The primary structure comprises 106 residues: UPF0145 protein Tlet_1264 (106 aa).

The protein belongs to the UPF0145 family.

In Pseudothermotoga lettingae (strain ATCC BAA-301 / DSM 14385 / NBRC 107922 / TMO) (Thermotoga lettingae), this protein is UPF0145 protein Tlet_1264.